The sequence spans 1392 residues: ATP-dependent helicase/nuclease subunit A (1392 aa).

The 592-residue stretch at 4–595 (FKPTPAQSKA…IVLGENFRSM (592 aa)) folds into the UvrD-like helicase ATP-binding domain. 25-32 (ASAGSGKT) is a binding site for ATP. The region spanning 623–929 (AHLKYAATYY…NVMTIHGSKG (307 aa)) is the UvrD-like helicase C-terminal domain.

Belongs to the helicase family. AddA subfamily. Heterodimer of AddA and AddB/RexB. Requires Mg(2+) as cofactor.

It carries out the reaction Couples ATP hydrolysis with the unwinding of duplex DNA by translocating in the 3'-5' direction.. The enzyme catalyses ATP + H2O = ADP + phosphate + H(+). Its function is as follows. The heterodimer acts as both an ATP-dependent DNA helicase and an ATP-dependent, dual-direction single-stranded exonuclease. Recognizes the chi site generating a DNA molecule suitable for the initiation of homologous recombination. The AddA nuclease domain is required for chi fragment generation; this subunit has the helicase and 3' -&gt; 5' nuclease activities. The chain is ATP-dependent helicase/nuclease subunit A from Limosilactobacillus reuteri subsp. reuteri (strain JCM 1112) (Lactobacillus reuteri).